Consider the following 533-residue polypeptide: L-aspartate oxidase 1 (533 aa).

FAD contacts are provided by residues 10–13 (SGLA), Lys32, 39–46 (ASDWAQGG), and Asp214. Arg281 serves as the catalytic Proton donor/acceptor. FAD is bound by residues Glu366 and 382–383 (SL).

Belongs to the FAD-dependent oxidoreductase 2 family. NadB subfamily. It depends on FAD as a cofactor.

It localises to the cytoplasm. The enzyme catalyses L-aspartate + O2 = iminosuccinate + H2O2. It functions in the pathway cofactor biosynthesis; NAD(+) biosynthesis; iminoaspartate from L-aspartate (oxidase route): step 1/1. Catalyzes the oxidation of L-aspartate to iminoaspartate, the first step in the de novo biosynthesis of NAD(+). This Ralstonia nicotianae (strain ATCC BAA-1114 / GMI1000) (Ralstonia solanacearum) protein is L-aspartate oxidase 1 (nadB1).